A 567-amino-acid polypeptide reads, in one-letter code: uncharacterized protein (567 aa).

Over 1-31 (MLDTILINVFRRDGDDDDDDGQDPALQELYS) the chain is Lumenal. The helical transmembrane segment at 32–52 (SWALFILLVLLIGALLTSYYV) threads the bilayer. Residues 53–64 (QSKKIRAIHETV) are Cytoplasmic-facing. The chain crosses the membrane as a helical span at residues 65 to 85 (ISVFVGMVVGLIIRVSPGLII). Residues 86–87 (QN) are Lumenal-facing. Residues 88-108 (MVSFHSTYFFNVLLPPIILNS) traverse the membrane as a helical segment. Residues 109 to 128 (GYELHQSNFFRNIGTILTFA) lie on the Cytoplasmic side of the membrane. Residues 129-149 (FAGTFISAVTLGVLVYIFSFL) traverse the membrane as a helical segment. The Lumenal portion of the chain corresponds to 150–159 (NFENLSMTFV). The helical transmembrane segment at 160 to 180 (EALSMGATLSATDPVTVLAIF) threads the bilayer. The Cytoplasmic segment spans residues 181-188 (NSYKVDQK). A helical transmembrane segment spans residues 189-209 (LYTIIFGESILNDAVAIVMFE). Residues 210–227 (TLQQFQGKTLHFFTLFSG) are Lumenal-facing. Residues 228-248 (IGIFIITFFISLLIGVSIGLI) traverse the membrane as a helical segment. Residues 249–277 (TALLLKYSYLRRYPSIESCIILLMAYTSY) lie on the Cytoplasmic side of the membrane. Residues 278–298 (FFSNGCHMSGVVSLLFCGITL) traverse the membrane as a helical segment. Over 299–315 (KHYAFFNMSYKAKLSTK) the chain is Lumenal. A helical membrane pass occupies residues 316–338 (YVFRVLAQLSENFIFIYLGMSLF). At 339–347 (TQVDLVYKP) the chain is on the cytoplasmic side. A helical membrane pass occupies residues 348 to 366 (IFILITTVAVTASRYMNVF). Topologically, residues 367–392 (PLSNLLNKFHRQRNGNLIDHIPYSYQ) are lumenal. Residues 393 to 413 (MMLFWAGLRGAVGVALAAGFE) form a helical membrane-spanning segment. Residues 414–424 (GENAQTLRATT) lie on the Cytoplasmic side of the membrane. Residues 425–445 (LVVVVLTLIIFGGTTARMLEI) form a helical membrane-spanning segment. The Lumenal segment spans residues 446–567 (LHIETGVAAD…RDNLKNGTKK (122 aa)). Ser515 carries the post-translational modification Phosphoserine.

It belongs to the monovalent cation:proton antiporter 1 (CPA1) transporter (TC 2.A.36) family.

The protein resides in the golgi apparatus membrane. This is an uncharacterized protein from Schizosaccharomyces pombe (strain 972 / ATCC 24843) (Fission yeast).